A 2169-amino-acid chain; its full sequence is Protein sidekick-1 (2169 aa).

Positions 1–50 (MVGRKVDREIIARRNSRRDGMMMKLNFCFFFCRRWWAFLLLQLHMLQALA) are cleaved as a signal peptide. Residues 51–1961 (QDDVAPYFKT…TEAPFYEEWW (1911 aa)) are Extracellular-facing. 5 consecutive Ig-like C2-type domains span residues 56–138 (PYFK…SEVQ), 143–229 (GNFM…SPLI), 245–333 (PIIV…AFIS), 338–428 (PYFT…LDVT), and 432–521 (PAFI…VMLT). Residues Cys78 and Cys121 are joined by a disulfide bond. N-linked (GlcNAc...) asparagine glycans are attached at residues Asn93, Asn223, and Asn253. 3 disulfides stabilise this stretch: Cys267–Cys314, Cys360–Cys410, and Cys453–Cys505. Residues Asn502, Asn524, and Asn534 are each glycosylated (N-linked (GlcNAc...) asparagine). Residues 525–615 (RTFIVHPPEN…GNDSRMARLE (91 aa)) form the Ig-like C2-type 6 domain. A disulfide bond links Cys547 and Cys599. N-linked (GlcNAc...) asparagine glycosylation is found at Asn607, Asn631, Asn734, Asn773, Asn834, Asn967, and Asn977. Fibronectin type-III domains follow at residues 622–718 (SPQN…LPEE), 723–819 (PPKN…TLQG), 824–922 (PPQN…TLED), 926–1020 (AVGH…VPPE), 1024–1123 (APSN…TLQA), 1128–1226 (APGS…TRES), 1231–1328 (PPEN…TKDD), 1332–1426 (PPIR…TEKR), 1431–1528 (PPQQ…TLQD), 1533–1651 (PPSS…VGEA), 1656–1752 (APQN…THQA), 1756–1851 (APSF…AGPA), and 1854–1955 (SPGS…TEAP). N-linked (GlcNAc...) asparagine glycosylation is found at Asn1234 and Asn1285. The disordered stretch occupies residues 1423 to 1443 (TEKRERPAPPQQLTTPQSDVS). Positions 1433–1443 (QQLTTPQSDVS) are enriched in polar residues. 5 N-linked (GlcNAc...) asparagine glycosylation sites follow: Asn1606, Asn1700, Asn1719, Asn1771, and Asn1845. The chain crosses the membrane as a helical span at residues 1962–1982 (FLLVMALSSLILILLVVFALV). At 1983–2169 (LHGQSKKYKN…TPVTGFSSFV (187 aa)) the chain is on the cytoplasmic side. 2 disordered regions span residues 2028-2050 (TFSKKNGTRSPPRPSPGGLHYSD) and 2145-2169 (GGVYTPTGQPAPGSRTPVTGFSSFV). Residues 2160–2169 (TPVTGFSSFV) show a composition bias toward polar residues. The short motif at 2163–2169 (TGFSSFV) is the PDZ-binding element.

Belongs to the sidekick family. As to quaternary structure, homodimer; mediates homophilic interactions to promote cell adhesion. As to expression, expressed by non-overlapping subsets of retinal neurons. SDK1, SDK2, DSCAM and DSCAML1 are expressed in non-overlapping subsets of interneurons and retinal ganglion cells (RGCs) that form synapses in distinct inner plexiform layer (IPL) sublaminae.

It localises to the cell membrane. Its subcellular location is the synapse. In terms of biological role, adhesion molecule that promotes lamina-specific synaptic connections in the retina. Expressed in specific subsets of interneurons and retinal ganglion cells (RGCs) and promotes synaptic connectivity via homophilic interactions. This Gallus gallus (Chicken) protein is Protein sidekick-1.